A 72-amino-acid polypeptide reads, in one-letter code: Translation initiation factor IF-1 (72 aa).

Positions 1-72 constitute an S1-like domain; sequence MAKEENIEMQ…SKGRIIFRAR (72 aa).

It belongs to the IF-1 family. In terms of assembly, component of the 30S ribosomal translation pre-initiation complex which assembles on the 30S ribosome in the order IF-2 and IF-3, IF-1 and N-formylmethionyl-tRNA(fMet); mRNA recruitment can occur at any time during PIC assembly.

It is found in the cytoplasm. Functionally, one of the essential components for the initiation of protein synthesis. Stabilizes the binding of IF-2 and IF-3 on the 30S subunit to which N-formylmethionyl-tRNA(fMet) subsequently binds. Helps modulate mRNA selection, yielding the 30S pre-initiation complex (PIC). Upon addition of the 50S ribosomal subunit IF-1, IF-2 and IF-3 are released leaving the mature 70S translation initiation complex. This Colwellia psychrerythraea (strain 34H / ATCC BAA-681) (Vibrio psychroerythus) protein is Translation initiation factor IF-1.